The chain runs to 463 residues: Retinoic acid receptor RXR-gamma (463 aa).

Residues 1-138 (MYGNYSHFMK…TSPGSLVKHI (138 aa)) are modulating. The segment at 16–53 (GGSPGHTGSTSMSPSVALPTGKPMDSHPSYTDTPVSAP) is disordered. NR C4-type zinc fingers lie at residues 139–159 (CAIC…CEGC) and 175–199 (CRDN…YQKC). Positions 139–204 (CAICGDRSSG…RYQKCLVMGM (66 aa)) form a DNA-binding region, nuclear receptor. Residues 205 to 230 (KREAVQEERQRSRERAESEAECASSS) form a hinge region. The span at 211-222 (EERQRSRERAES) shows a compositional bias: basic and acidic residues. The interval 211 to 232 (EERQRSRERAESEAECASSSHE) is disordered. The NR LBD domain maps to 231-459 (HEDMPVERIL…SFLMEMLETP (229 aa)).

The protein belongs to the nuclear hormone receptor family. NR2 subfamily. Homodimer. Heterodimer with a RAR molecule. Binds DNA preferentially as a RAR/RXR heterodimer. Interacts with RARA. In terms of processing, acetylated by EP300.

The protein localises to the nucleus. Its subcellular location is the cytoplasm. Its function is as follows. Receptor for retinoic acid. Retinoic acid receptors bind as heterodimers to their target response elements in response to their ligands, all-trans or 9-cis retinoic acid, and regulate gene expression in various biological processes. The RAR/RXR heterodimers bind to the retinoic acid response elements (RARE) composed of tandem 5'-AGGTCA-3' sites known as DR1-DR5. The high affinity ligand for RXRs is 9-cis retinoic acid. In Mus musculus (Mouse), this protein is Retinoic acid receptor RXR-gamma (Rxrg).